We begin with the raw amino-acid sequence, 264 residues long: Thymidylate synthase (264 aa).

R21 is a binding site for dUMP. (6R)-5,10-methylene-5,6,7,8-tetrahydrofolate is bound at residue H51. DUMP is bound at residue 126–127; it reads RR. C146 (nucleophile) is an active-site residue. DUMP contacts are provided by residues 166-169, N177, and 207-209; these read RSCD and HLY. (6R)-5,10-methylene-5,6,7,8-tetrahydrofolate is bound at residue D169. Residue A263 coordinates (6R)-5,10-methylene-5,6,7,8-tetrahydrofolate.

Belongs to the thymidylate synthase family. Bacterial-type ThyA subfamily. Homodimer.

The protein localises to the cytoplasm. The catalysed reaction is dUMP + (6R)-5,10-methylene-5,6,7,8-tetrahydrofolate = 7,8-dihydrofolate + dTMP. Its pathway is pyrimidine metabolism; dTTP biosynthesis. Functionally, catalyzes the reductive methylation of 2'-deoxyuridine-5'-monophosphate (dUMP) to 2'-deoxythymidine-5'-monophosphate (dTMP) while utilizing 5,10-methylenetetrahydrofolate (mTHF) as the methyl donor and reductant in the reaction, yielding dihydrofolate (DHF) as a by-product. This enzymatic reaction provides an intracellular de novo source of dTMP, an essential precursor for DNA biosynthesis. This Hamiltonella defensa subsp. Acyrthosiphon pisum (strain 5AT) protein is Thymidylate synthase.